Here is a 71-residue protein sequence, read N- to C-terminus: Protein PSY3 (71 aa).

Positions 1-25 (MGYSSSSRIGLCLFLFFTFALLSSA) are cleaved as a signal peptide. The propeptide occupies 26–49 (RISLSFSENEMTVVPERSLMVSTN). The interval 47-71 (STNDYSDPTANGRHDPPRGGRGRRR) is disordered. Sulfotyrosine is present on tyrosine 51. Residue proline 63 is modified to 4-hydroxyproline. Proline 63 is a glycosylation site (O-linked (Ara...) hydroxyproline). The propeptide occupies 66–71 (GRGRRR).

The protein belongs to the sulfated-peptide plant hormone family. The sulfation and the glycosylation are required for full activity.

The protein resides in the secreted. Promotes cellular proliferation and expansion. In Arabidopsis thaliana (Mouse-ear cress), this protein is Protein PSY3 (PSY3).